The sequence spans 196 residues: Probable malonic semialdehyde reductase RutE (196 aa).

Belongs to the nitroreductase family. HadB/RutE subfamily. The cofactor is FMN.

It catalyses the reaction 3-hydroxypropanoate + NADP(+) = 3-oxopropanoate + NADPH + H(+). May reduce toxic product malonic semialdehyde to 3-hydroxypropionic acid, which is excreted. This Shigella flexneri serotype 5b (strain 8401) protein is Probable malonic semialdehyde reductase RutE.